The following is a 143-amino-acid chain: Small ribosomal subunit protein uS12 (143 aa).

The span at 1–20 (MGKPRGLRTARKHRSHRRDQ) shows a compositional bias: basic residues. The tract at residues 1–26 (MGKPRGLRTARKHRSHRRDQRWHDKD) is disordered. At proline 62 the chain carries Hydroxyproline.

The protein belongs to the universal ribosomal protein uS12 family. In terms of assembly, component of the 40S small ribosomal subunit.

The protein localises to the cytoplasm. It localises to the cytosol. Its subcellular location is the rough endoplasmic reticulum. This is Small ribosomal subunit protein uS12 (RpS23) from Dermacentor variabilis (American dog tick).